The chain runs to 445 residues: MMKTLLLLVGLLLTWDNGRVLGDQAVSDTELQEMSTEGSKYINKEIKNALKGVKQIKTLIEQTNEERKSLLSNLEEAKKKKEDALNDTKDSETKLKASQGVCNDTMMALWEECKPCLKQTCMKFYARVCRSGSGLVGHQLEEFLNQSSPFYFWMNGDRIDSLLENDRQQTHALDVMQDSFNRASSIMDELFQDRFFTREPQDTYHYSPFSLFQRRPFFNPKFRIARNIIPFPRFQPLNFHDMFQPFFDMIHQAQQAMDVNLHRIPYHFPIEFPEEDNRTVCKEIRHNSTGCLKMKDQCEKCQEILSVDCSSNNPAQVQLRQELSNSLQIAEKFTKLYDELLQSYQEKMFNTSSLLKQLNEQFSWVSQLANLTQSEDPFYLQVTTVGSQTSDSNVPVGFTKVVVKLFDSDPITVMIPEAVSRNNPKFMETVAEKALQEYRQKHREE.

The N-terminal stretch at 1–22 is a signal peptide; that stretch reads MMKTLLLLVGLLLTWDNGRVLG. A Nuclear localization signal motif is present at residues 78-81; it reads KKKK. 2 N-linked (GlcNAc...) asparagine glycosylation sites follow: Asn-86 and Asn-103. Cystine bridges form between Cys-102/Cys-309, Cys-113/Cys-301, Cys-116/Cys-298, Cys-121/Cys-291, and Cys-129/Cys-281. Ser-133 bears the Phosphoserine mark. Asn-145, Asn-277, Asn-287, Asn-350, and Asn-370 each carry an N-linked (GlcNAc...) asparagine glycan. At Ser-392 the chain carries Phosphoserine. Residues 439-443 carry the Nuclear localization signal motif; sequence RQKHR.

It belongs to the clusterin family. In terms of assembly, antiparallel disulfide-linked heterodimer of an alpha chain and a beta chain. Self-associates and forms higher oligomers. Interacts with a broad range of misfolded proteins, including APP, APOC2 and LYZ. Slightly acidic pH promotes interaction with misfolded proteins. Forms high-molecular weight oligomers upon interaction with misfolded proteins. Interacts with APOA1, LRP2, CLUAP1 and PON1. Interacts with the complement membrane attack complex. Interacts (via alpha chain) with XRCC6. Interacts with SYVN1, COMMD1, BTRC, CUL1 and with ubiquitin and SCF (SKP1-CUL1-F-box protein) E3 ubiquitin-protein ligase complexes. Interacts (via alpha chain) with BAX in stressed cells, where BAX undergoes a conformation change leading to association with the mitochondrial membrane. Does not interact with BAX in unstressed cells. Found in a complex with LTF, CLU, EPPIN and SEMG1. Interacts (immaturely glycosylated pre-secreted form) with HSPA5; this interaction promotes CLU stability and facilitates stress-induced CLU retrotranslocation from the secretory pathway to the mitochondria, thereby reducing stress-induced apoptosis by stabilizing mitochondrial membrane integrity. Interacts with BCL2L1; this interaction releases and activates BAX and promotes cell death. Interacts with TGFBR2 and ACVR1. Interacts (secreted form) with STMN3; this interaction may act as an important modulator during neuronal differentiation. Interacts with VLDLR and LRP8. Post-translationally, proteolytically cleaved on its way through the secretory system, probably within the Golgi lumen. Proteolytic cleavage is not necessary for its chaperone activity. All non-secreted forms are not proteolytically cleaved. Chaperone activity of uncleaved forms is dependent on a non-reducing environment. This proteolytic maturation is disulfide bond formation dependent. Polyubiquitinated, leading to proteasomal degradation. Under cellular stress, the intracellular level of cleaved form is reduced due to proteasomal degradation. In terms of processing, heavily N-glycosylated. About 30% of the protein mass is comprised of complex N-linked carbohydrate. Endoplasmic reticulum (ER) stress induces changes in glycosylation status and increases level of hypoglycosylated forms. Core carbohydrates are essential for chaperone activity. Non-secreted forms are hypoglycosylated or unglycosylated.

Its subcellular location is the secreted. It is found in the nucleus. The protein resides in the cytoplasm. It localises to the mitochondrion membrane. The protein localises to the cytosol. Its subcellular location is the microsome. It is found in the endoplasmic reticulum. The protein resides in the mitochondrion. It localises to the perinuclear region. The protein localises to the cytoplasmic vesicle. Its subcellular location is the secretory vesicle. It is found in the chromaffin granule. Its function is as follows. Functions as extracellular chaperone that prevents aggregation of non native proteins. Prevents stress-induced aggregation of blood plasma proteins. Inhibits formation of amyloid fibrils by APP, APOC2, B2M, CALCA, CSN3, SNCA and aggregation-prone LYZ variants (in vitro). Does not require ATP. Maintains partially unfolded proteins in a state appropriate for subsequent refolding by other chaperones, such as HSPA8/HSC70. Does not refold proteins by itself. Binding to cell surface receptors triggers internalization of the chaperone-client complex and subsequent lysosomal or proteasomal degradation. When secreted, protects cells against apoptosis and against cytolysis by complement: inhibits assembly of the complement membrane attack complex (MAC) by preventing polymerization of C9 pore component of the MAC complex. Intracellular forms interact with ubiquitin and SCF (SKP1-CUL1-F-box protein) E3 ubiquitin-protein ligase complexes and promote the ubiquitination and subsequent proteasomal degradation of target proteins. Promotes proteasomal degradation of COMMD1 and IKBKB. Modulates NF-kappa-B transcriptional activity. Following stress, promotes apoptosis. Inhibits apoptosis when associated with the mitochondrial membrane by interference with BAX-dependent release of cytochrome c into the cytoplasm. Plays a role in the regulation of cell proliferation. An intracellular form suppresses stress-induced apoptosis by stabilizing mitochondrial membrane integrity through interaction with HSPA5. Secreted form does not affect caspase or BAX-mediated intrinsic apoptosis and TNF-induced NF-kappa-B-activity. Secreted form act as an important modulator during neuronal differentiation through interaction with STMN3. Plays a role in the clearance of immune complexes that arise during cell injury. This is Clusterin (CLU) from Canis lupus familiaris (Dog).